The sequence spans 465 residues: NADH-quinone oxidoreductase subunit N (465 aa).

13 helical membrane-spanning segments follow: residues 9 to 29, 44 to 64, 73 to 93, 110 to 130, 159 to 179, 198 to 218, 235 to 255, 265 to 285, 292 to 312, 327 to 347, 371 to 391, 405 to 427, and 444 to 464; these read FNFV…VLLL, ASII…GFVL, LFVS…FSML, FLFM…IVIF, YFTL…FVYL, PILL…LSIA, FIAF…LRIF, EYIV…VALI, MLAY…VSSM, IFAL…IFLI, IMLA…IFWG, YALV…KILI, and VKQK…VFLL.

Belongs to the complex I subunit 2 family. As to quaternary structure, NDH-1 is composed of 14 different subunits. Subunits NuoA, H, J, K, L, M, N constitute the membrane sector of the complex.

The protein localises to the cell inner membrane. It carries out the reaction a quinone + NADH + 5 H(+)(in) = a quinol + NAD(+) + 4 H(+)(out). In terms of biological role, NDH-1 shuttles electrons from NADH, via FMN and iron-sulfur (Fe-S) centers, to quinones in the respiratory chain. The immediate electron acceptor for the enzyme in this species is believed to be ubiquinone. Couples the redox reaction to proton translocation (for every two electrons transferred, four hydrogen ions are translocated across the cytoplasmic membrane), and thus conserves the redox energy in a proton gradient. This Campylobacter lari (strain RM2100 / D67 / ATCC BAA-1060) protein is NADH-quinone oxidoreductase subunit N.